A 168-amino-acid polypeptide reads, in one-letter code: Plasma membrane-associated cation-binding protein 2 (168 aa).

Gly-2 carries N-myristoyl glycine lipidation. 7 consecutive repeat copies span residues 26–30, 69–73, 94–99, 103–107, 110–115, 118–122, and 124–129. The 7 X 5 AA approximate repeats of V-E-E-K-K stretch occupies residues 26-129; it reads VEEEKPREVE…EKKPVEEEKK (104 aa). Residues 56 to 77 adopt a coiled-coil conformation; it reads EEIIATGEKEIEIVEEKKEEAK. The span at 88–131 shows a compositional bias: basic and acidic residues; it reads EEKKPAVEEEKKTAPVEEKKPAVEEEKKPAVEEKKPVEEEKKEV. Residues 88 to 168 are disordered; it reads EEKKPAVEEE…ETPAAAPQKA (81 aa). Residues 152-168 are compositionally biased toward low complexity; it reads ETPAKAPETPAAAPQKA.

This sequence belongs to the DREPP family. As to quaternary structure, binds microtubules. Interacts with calcium ion Ca(2+), calmodulin and some phosphatidylinositol phosphates (PtdInsPs) such as phosphatidylinositol 3,5-bisphosphate [PtdIns(3,5)P(2)], PtdIns(4,5)P(2) and PtdIns(3,4,5)P(3). Cu(2+) serves as cofactor. Mostly expressed in the expanding cells, specifically in roots (except in root tips) and flowers (at protein level). Also detected in cotyledons, hypocotyls and trichome stalks.

It is found in the cell membrane. The protein localises to the cytoplasm. Its subcellular location is the cytoskeleton. Its function is as follows. May be involved in intracellular signaling through interaction with PtdInsPs and calmodulin (CaM); may keep PtdInsPs attached to the plasma membrane until Ca(2+)-CaM reaches a competitive concentration subsequent to an increase triggered by a stimulus, thus leading to PtdInsPs release and subsequent activation of InsPs-dependent signaling cascade. Binds to microtubules and inhibits tubulin polymerization. Regulates directional cell growth and cortical microtubule organization by destabilizing microtubules (e.g. in cotyledon pavement cells). The sequence is that of Plasma membrane-associated cation-binding protein 2 from Arabidopsis thaliana (Mouse-ear cress).